We begin with the raw amino-acid sequence, 156 residues long: SCP2 sterol-binding domain-containing protein 1 (156 aa).

In terms of domain architecture, SCP2 spans 44–156 (TVPVFEDISQ…ERVFKDWAKW (113 aa)).

The sequence is that of SCP2 sterol-binding domain-containing protein 1 (SCP2D1) from Bos taurus (Bovine).